We begin with the raw amino-acid sequence, 508 residues long: H/ACA ribonucleoprotein complex subunit 4 (508 aa).

Residues 1–29 form a disordered region; the sequence is MADVEVRKEKKKKKIKEEPLDGDDIGTLQ. D123 serves as the catalytic Nucleophile. The PUA domain occupies 294-369; the sequence is HKRIIMKDSS…VVAKIKRVIM (76 aa). Positions 423 to 508 are disordered; sequence AAQEVSPTNG…KDRDRDEAQE (86 aa). The residue at position 442 (S442) is a Phosphoserine. The span at 442–457 shows a compositional bias: low complexity; sequence STSSVEETAAAAVSEE. T443 carries the post-translational modification Phosphothreonine. 2 positions are modified to phosphoserine: S444 and S445. Phosphothreonine is present on T449. S455 bears the Phosphoserine mark. Position 458 is a phosphothreonine (T458). Over residues 475–485 the composition is skewed to acidic residues; sequence EAPEAAEEEAE. Basic and acidic residues predominate over residues 499–508; it reads KDRDRDEAQE.

This sequence belongs to the pseudouridine synthase TruB family. In terms of assembly, component of the box H/ACA small nucleolar ribonucleoprotein (H/ACA snoRNP) complex consisting of Nop60B, Gar1, NPH2 and Nop10, and associated with H/ACA-type snoRNAs. As to expression, expressed at higher levels in females than in males. Expressed almost exclusively in females with high levels of expression in the ovary.

The protein localises to the nucleus. Its subcellular location is the nucleolus. It catalyses the reaction a uridine in RNA = a pseudouridine in RNA. Functionally, catalytic subunit of the box H/ACA small nucleolar ribonucleoprotein (H/ACA snoRNP) complex, which catalyzes pseudouridylation of rRNA. This involves the isomerization of uridine such that the ribose is subsequently attached to C5, instead of the normal N1. Pseudouridine ('psi') residues may serve to stabilize the conformation of rRNAs. Required for ribosome biogenesis; plays a central role in ribosomal RNA processing. H/ACA snoRNP complex-dependent ribosome biogenesis is important in female germline cell differentiation during oogenesis. Essential for viability and female fertility. Required for maintenance of the germline stem cell lineage during spermatogenesis. In Drosophila melanogaster (Fruit fly), this protein is H/ACA ribonucleoprotein complex subunit 4.